Here is a 1509-residue protein sequence, read N- to C-terminus: DNA polymerase alpha catalytic subunit (1509 aa).

The disordered stretch occupies residues 1–162; it reads MNRPKREKKS…KKTKEKKNEI (162 aa). 2 stretches are compositionally biased toward basic and acidic residues: residues 21–35 and 42–79; these read EQIK…RTDQ and ERKR…RETS. Positions 27 to 67 form a coiled coil; it reads RDGEKRTDQLQEEDDERKRLEQLKEQETEFDKEERKRKNRD. Over residues 80 to 123 the composition is skewed to acidic residues; sequence DNEDEDEDEDDDGDNSDDDYSLDEDDEDGGGDGENNDSDQEEAI. Residues 127–137 are compositionally biased toward basic residues; the sequence is RKKKRQVKKKS. Residues 138 to 147 show a composition bias toward basic and acidic residues; that stretch reads KKDENGEPKV. A compositionally biased stretch (basic residues) spans 148-157; it reads KTPRVKKTKE. Coiled-coil stretches lie at residues 234-263 and 958-989; these read APDS…LLNK and LHGL…IQQQ. Zn(2+)-binding residues include Cys-1328, Cys-1331, Cys-1355, Cys-1358, Cys-1389, Cys-1392, Cys-1406, and Cys-1411. A CysA-type zinc finger spans residues 1328 to 1358; sequence CPYCGQNNEFTGIVKIDSEGKSESGFDCNQC. The CysB motif motif lies at 1389 to 1411; it reads CTECEKVSKNYKETSYRCARPQC.

The protein belongs to the DNA polymerase type-B family.

It localises to the nucleus. It catalyses the reaction DNA(n) + a 2'-deoxyribonucleoside 5'-triphosphate = DNA(n+1) + diphosphate. Polymerase alpha in a complex with DNA primase is a replicative polymerase. The sequence is that of DNA polymerase alpha catalytic subunit (pola1) from Dictyostelium discoideum (Social amoeba).